A 301-amino-acid chain; its full sequence is tRNA dimethylallyltransferase (301 aa).

ATP is bound at residue 12 to 19 (GPTAVGKT). Position 14 to 19 (14 to 19 (TAVGKT)) interacts with substrate. Residues 37 to 40 (DSQQ) form an interaction with substrate tRNA region.

Belongs to the IPP transferase family. As to quaternary structure, monomer. It depends on Mg(2+) as a cofactor.

It catalyses the reaction adenosine(37) in tRNA + dimethylallyl diphosphate = N(6)-dimethylallyladenosine(37) in tRNA + diphosphate. Catalyzes the transfer of a dimethylallyl group onto the adenine at position 37 in tRNAs that read codons beginning with uridine, leading to the formation of N6-(dimethylallyl)adenosine (i(6)A). In Streptococcus uberis (strain ATCC BAA-854 / 0140J), this protein is tRNA dimethylallyltransferase.